The chain runs to 134 residues: MKPSERRKARRLAVQAIYSWQLSGNNIADVEHEFLTEQSLDGVDVAYFRELFSGVATKKPQLDELIIPHLERPIDEVSPVEKAIVRLATYELTFRKDVPYKVAINEAIELAKAFGADESHKFVNGLLDKLVARK.

The protein belongs to the NusB family.

Functionally, involved in transcription antitermination. Required for transcription of ribosomal RNA (rRNA) genes. Binds specifically to the boxA antiterminator sequence of the ribosomal RNA (rrn) operons. This chain is Transcription antitermination protein NusB, found in Shewanella sp. (strain W3-18-1).